Here is a 475-residue protein sequence, read N- to C-terminus: Ribulose bisphosphate carboxylase large chain (475 aa).

A propeptide spanning residues 1 to 2 (MS) is cleaved from the precursor. At Pro3 the chain carries N-acetylproline. Lys14 carries the post-translational modification N6,N6,N6-trimethyllysine. Residues Asn123 and Thr173 each coordinate substrate. Lys175 acts as the Proton acceptor in catalysis. Lys177 provides a ligand contact to substrate. Mg(2+) contacts are provided by Lys201, Asp203, and Glu204. An N6-carboxylysine modification is found at Lys201. The active-site Proton acceptor is His294. The substrate site is built by Arg295, His327, and Ser379.

Belongs to the RuBisCO large chain family. Type I subfamily. As to quaternary structure, heterohexadecamer of 8 large chains and 8 small chains; disulfide-linked. The disulfide link is formed within the large subunit homodimers. Mg(2+) serves as cofactor. Post-translationally, the disulfide bond which can form in the large chain dimeric partners within the hexadecamer appears to be associated with oxidative stress and protein turnover.

The protein resides in the plastid. Its subcellular location is the chloroplast. It catalyses the reaction 2 (2R)-3-phosphoglycerate + 2 H(+) = D-ribulose 1,5-bisphosphate + CO2 + H2O. It carries out the reaction D-ribulose 1,5-bisphosphate + O2 = 2-phosphoglycolate + (2R)-3-phosphoglycerate + 2 H(+). Functionally, ruBisCO catalyzes two reactions: the carboxylation of D-ribulose 1,5-bisphosphate, the primary event in carbon dioxide fixation, as well as the oxidative fragmentation of the pentose substrate in the photorespiration process. Both reactions occur simultaneously and in competition at the same active site. In Pinus pinea (Italian stone pine), this protein is Ribulose bisphosphate carboxylase large chain.